Reading from the N-terminus, the 155-residue chain is Small ribosomal subunit protein uS9 (155 aa).

Belongs to the universal ribosomal protein uS9 family.

The protein is Small ribosomal subunit protein uS9 of Sinorhizobium medicae (strain WSM419) (Ensifer medicae).